Consider the following 372-residue polypeptide: GPN-loop GTPase 1 (372 aa).

Residue Ala2 is modified to N-acetylalanine. 29–34 lines the GTP pocket; it reads GSGKTT. The Gly-Pro-Asn (GPN)-loop; involved in dimer interface signature appears at 86-88; it reads GPN. 189-192 contributes to the GTP binding site; it reads NKTD. Ser301 and Ser314 each carry phosphoserine. The interval 303–372 is disordered; sequence ALDPEAGKGN…ESMAHWKRNK (70 aa). Thr328 is modified (phosphothreonine). The segment covering 330–342 has biased composition (acidic residues); sequence DEEDEEADSDTDD. The residue at position 338 (Ser338) is a Phosphoserine. Thr340 carries the phosphothreonine modification. Residues 343-355 show a composition bias toward basic and acidic residues; the sequence is IDHRVTEESREEP.

Belongs to the GPN-loop GTPase family. In terms of assembly, heterodimer with GPN3. Binds to RNA polymerase II (RNAPII). Interacts directly with RNAPII subunits RPB4 and RPB7 and the CTD of RPB1. Interacts with XPA.

The protein localises to the cytoplasm. Its subcellular location is the nucleus. In terms of biological role, small GTPase required for proper nuclear import of RNA polymerase II (RNAPII). May act at an RNAP assembly step prior to nuclear import. Forms an interface between the RNA polymerase II enzyme and chaperone/scaffolding proteins, suggesting that it is required to connect RNA polymerase II to regulators of protein complex formation. May be involved in nuclear localization of XPA. The protein is GPN-loop GTPase 1 of Mus musculus (Mouse).